A 181-amino-acid chain; its full sequence is Adenine phosphoribosyltransferase (181 aa).

The protein belongs to the purine/pyrimidine phosphoribosyltransferase family. As to quaternary structure, homodimer.

The protein resides in the cytoplasm. It catalyses the reaction AMP + diphosphate = 5-phospho-alpha-D-ribose 1-diphosphate + adenine. The protein operates within purine metabolism; AMP biosynthesis via salvage pathway; AMP from adenine: step 1/1. Functionally, catalyzes a salvage reaction resulting in the formation of AMP, that is energically less costly than de novo synthesis. The sequence is that of Adenine phosphoribosyltransferase from Vibrio vulnificus (strain CMCP6).